We begin with the raw amino-acid sequence, 589 residues long: MSSHKESSEYEMQYRSTIQPRTAVRSQSRQSGNYVSGGNGAGSGGRVLKMVTEMGSATVGGISPALSANAAKSFLEATDKEKKTLQGLNDRLGNYIDRVKKLEEQNRKLVADLDELRGKWGKDTSEIKIKYSESLSTARKDIDDAARRKAEVDVKVARHRDDLAEYRSRYEDIQQRRESDREKISQWTNAIADAQSEVEMLRARFKQLTDEEKRVTADNSRIWEELQKARSDLDDETIGRIDFQNQVQTLMEELEFLRRVHEQEVKELQALLAQAPADTREFFKNELALAIRDIKDEYDIIAKQGKQDMESWYKLKVSEVQGSANRANMESTYQRDEVKRMRDNIGDLRGKLGDLENKNSLLEKEVQNLNYQLTDDQRQYEAALNDRDATLRRMREECQTLVAELQALLDTKQMLDAEIAIYRKMLEGEETRVGLTQMVEQAVKTHSLQQQENTDSTRSVRGEVSTKTTFQRSAKGNVTISECDPNGKFIKLENSHRNKDENVGEHKIRRKLDGRREIVYSIPANVVIKPGKNLTIYARDQGGINNPPESLVFDGENTWGIGANVVTSLVNKDGEERATHTQKTIQSGQ.

The interval Met1 to Gly42 is disordered. The segment at Ser8 to Thr84 is head. The segment covering Tyr14–Gln30 has biased composition (polar residues). One can recognise an IF rod domain in the interval Glu81–Val433. The interval Leu85–Leu116 is coil 1A. The segment at Arg117 to Lys130 is linker 1. The tract at residues Tyr131–Leu268 is coil 1B. Residues Gln269–Asn285 are linker 12. The tract at residues Glu286–Val433 is coil 2. A tail region spans residues Gly434–Gly588. Positions Lys444–Phe470 are disordered. Residues Thr466–Thr584 enclose the LTD domain.

Belongs to the intermediate filament family. As to quaternary structure, forms some heteromeric filaments with ifa-1, ifa-2, ifa-3 and probably ifa-4. In terms of tissue distribution, expressed in epidermal cells. Expressed in amphid sensory neurons, the excretory cells, the vulva, the uterus, the rectum and some neurons of the tail. Isoform a and isoform b display a similar pattern of expression. Isoform a is predominant in pharyngeal tonofilaments.

It is found in the cytoplasm. Functionally, cytoplasmic intermediate filaments provide mechanical strength to cells. Essential protein, involved in attachment structures in epidermal cells that connect muscles to the external cuticle. Required in morphogenesis and epidermal integrity. Probable component of embryonic epidermal attachment structures. Functions in larval muscle attachment independently of ifa-2. The sequence is that of Intermediate filament protein ifb-1 (ifb-1) from Caenorhabditis elegans.